The sequence spans 188 residues: Peptidyl-tRNA hydrolase (188 aa).

Residue Tyr17 coordinates tRNA. The active-site Proton acceptor is the His22. Positions 65, 67, and 113 each coordinate tRNA.

This sequence belongs to the PTH family. In terms of assembly, monomer.

Its subcellular location is the cytoplasm. It catalyses the reaction an N-acyl-L-alpha-aminoacyl-tRNA + H2O = an N-acyl-L-amino acid + a tRNA + H(+). Its function is as follows. Hydrolyzes ribosome-free peptidyl-tRNAs (with 1 or more amino acids incorporated), which drop off the ribosome during protein synthesis, or as a result of ribosome stalling. Catalyzes the release of premature peptidyl moieties from peptidyl-tRNA molecules trapped in stalled 50S ribosomal subunits, and thus maintains levels of free tRNAs and 50S ribosomes. This is Peptidyl-tRNA hydrolase from Mycoplasma pneumoniae (strain ATCC 29342 / M129 / Subtype 1) (Mycoplasmoides pneumoniae).